The following is a 312-amino-acid chain: MEKKKMGLLVMAYGTPYKEEDIERYYTHIRRGRKPEPEMLQDLKDRYKAIGGISPLSKITEQQAHGLCEHLNDIQDDIEFHVYIGLKHIEPFIEDAVADMHKDGITEAVSIVLAPHFSTFSVKSYNKRAQDEADKLGNLQITSVESWYDEPKFVDYWVKQVKDTYASMSQEERDSAVLIVSAHSLPEKIIAAGDPYPDQLAQSAKMIAEGAGIEHYEIGWQSEGNTPDPWLGPDVQDLTRDLFEQKGYQTFVYVPVGFVADHLEVLYDNDYECKVVTDEIGAAYYRPEMPNAKPAFIDALATVVLKKLDESK.

Residues Tyr-13, Arg-30, 46 to 47 (RY), Ser-54, and Tyr-125 each bind Fe-coproporphyrin III. Fe(2+)-binding residues include His-183 and Glu-264.

This sequence belongs to the ferrochelatase family.

The protein resides in the cytoplasm. The catalysed reaction is Fe-coproporphyrin III + 2 H(+) = coproporphyrin III + Fe(2+). Its pathway is porphyrin-containing compound metabolism; protoheme biosynthesis. Its function is as follows. Involved in coproporphyrin-dependent heme b biosynthesis. Catalyzes the insertion of ferrous iron into coproporphyrin III to form Fe-coproporphyrin III. The chain is Coproporphyrin III ferrochelatase from Bacillus pumilus (strain SAFR-032).